Reading from the N-terminus, the 550-residue chain is 4-coumarate--CoA ligase-like 8 (550 aa).

Residues serine 207, serine 208, glycine 209, threonine 210, threonine 211, and lysine 215 each contribute to the ATP site. Position 253 (phenylalanine 253) interacts with (E)-4-coumaroyl-AMP. A CoA-binding site is contributed by arginine 274. The interval 276-347 is SBD1; the sequence is DLGEMMAAVE…KKYPTVDVYQ (72 aa). 4 residues coordinate (E)-4-coumaroyl-AMP: glycine 325, glutamine 347, glycine 348, and threonine 352. ATP is bound by residues glutamine 347, glycine 348, threonine 352, aspartate 430, and arginine 445. The segment at 348 to 412 is SBD2; the sequence is GYALTESNGA…LKGPSIAKGY (65 aa). Lysine 447 and lysine 451 together coordinate (E)-4-coumaroyl-AMP. Residues lysine 453 and glycine 454 each contribute to the CoA site. Lysine 536 is a binding site for ATP. Residues 548 to 550 carry the Microbody targeting signal motif; sequence SKI.

Belongs to the ATP-dependent AMP-binding enzyme family. It depends on Mg(2+) as a cofactor.

The protein resides in the peroxisome. It catalyses the reaction (E)-4-coumarate + ATP + CoA = (E)-4-coumaroyl-CoA + AMP + diphosphate. It carries out the reaction (E)-4-coumarate + ATP + H(+) = (E)-4-coumaroyl-AMP + diphosphate. The catalysed reaction is (E)-4-coumaroyl-AMP + CoA = (E)-4-coumaroyl-CoA + AMP + H(+). Carboxylate--CoA ligase that may use 4-coumarate as substrate. Follows a two-step reaction mechanism, wherein the carboxylate substrate first undergoes adenylation by ATP, followed by a thioesterification in the presence of CoA to yield the final CoA thioester. The chain is 4-coumarate--CoA ligase-like 8 from Arabidopsis thaliana (Mouse-ear cress).